The following is a 488-amino-acid chain: Putative sugar transporter ERD6-like 13 (488 aa).

Transmembrane regions (helical) follow at residues 51–71 (LILL…GTAA), 89–109 (LAEF…GAAM), 116–138 (VFGR…LMIA), 151–171 (LFLG…IVEI), 182–202 (AINS…GSVI), 207–227 (LALI…FIPE), 291–311 (VGIG…TFYL), 324–344 (VGVM…IVIV), 353–373 (LTVA…SFLF), 390–410 (GVLV…WVMI), 423–445 (GTLC…NFLF), and 451–471 (GVFF…MKMV).

It belongs to the major facilitator superfamily. Sugar transporter (TC 2.A.1.1) family.

The protein localises to the membrane. Functionally, sugar transporter. The protein is Putative sugar transporter ERD6-like 13 of Arabidopsis thaliana (Mouse-ear cress).